The primary structure comprises 79 residues: MKFLILAGLLSTATALPIPLEQYAESSSEQRFIFYPPQVPPFFPQVLFPLPPQPPLVLTPNDLIALLIAILNQLGILFP.

The signal sequence occupies residues 1–15 (MKFLILAGLLSTATA).

It is found in the secreted. Tooth-associated epithelia protein that may participate in structuring the basal lamina at cell-tooth interface. This chain is Secretory calcium-binding phosphoprotein proline-glutamine rich 1, found in Homo sapiens (Human).